The primary structure comprises 543 residues: Chaperonin GroEL (543 aa).

Residues 29–32 (TLGP), 86–90 (DGTTT), Gly413, 476–478 (NAA), and Asp492 each bind ATP.

Belongs to the chaperonin (HSP60) family. Forms a cylinder of 14 subunits composed of two heptameric rings stacked back-to-back. Interacts with the co-chaperonin GroES.

The protein resides in the cytoplasm. The enzyme catalyses ATP + H2O + a folded polypeptide = ADP + phosphate + an unfolded polypeptide.. Its function is as follows. Together with its co-chaperonin GroES, plays an essential role in assisting protein folding. The GroEL-GroES system forms a nano-cage that allows encapsulation of the non-native substrate proteins and provides a physical environment optimized to promote and accelerate protein folding. The protein is Chaperonin GroEL of Streptococcus pyogenes serotype M1.